Reading from the N-terminus, the 2419-residue chain is MTAPGRSPLEPLLETWEDPSVPPGEQTDAYLTLTSRMTGEEGKEVIAEIEKNLSRLYTVLKAHISSQNSELSSAALQALGFCLYNPRITSGLSEANIQELLLTLNGIIKSSDKNVCTRALWVISKQTFPAELVSKMVSSIIDSLEVILSKGEIHSAVVDFEALNVIIRLIEQAPVQMGEESVRWAKLVIPLVVHSAQKVHLRGATALEMGMPLLLQKQQEIALITEHLMTTKLISELQKLFKNKNETYVLKLWPLFVKLLGKTLHRSGSFINSLLQLEELGFRSGTPMIKKIAFIAWKSLIDNFALNPDILCSAKRLKLLMQPLSSIHVRTETLALTKLEVWWYLLMRLGPQLPANFEQVCVPLIQSTISVDSIPSPQGNSSRGSASPGLSPLTPGHKGASPYGSPRGNLSSNTGGMAAIPSIQLLGLEMMLHFLLGPEVLSFAKQHKIVLSLEPLEHPLISSPSFFSKYAHTLITAVHDSFVSVGKDASDAVVSAIWKELISLVKSVTEAGNRKEKSGSEVLTLLLKSLENIVKSEVFPVSKTLVLMEITVKGLPPKVLGSPAYQVANMDILNGTPALFLIQLIFNNNLLECGVEDEKFFLNLETLVGCVLSGPTSPLAFSDSVLTVINQNAKQLVNKEHLWRMWSMIVSPLTDVIHQTNEVNQGDALEHNFSAIYGALTLPINHIFSAQTFPTGTMKALLKTWSELYRAFTRCASLVATAEENLCCEELSSKIMCSLEDEVLSDLLFLDRISHIIIVMVDCIDFSPYNKKYQPKIKSPQRSSDWSRKKKEPLGKLASLFKLIVKVIDTFHTLSLKETFSDTLLAIGNSIISMLSNVFGHISLPSMIREIFATFTRPLALLYENSKLDEAPKVYTSLNNKLEKLLGEIVACLQFSYLGAYDSELLEHLSPLLCVIFLHKNKQIRKQSALLWNATFAKATALVYPEELKPILRQAKQKILLLLPGLENVEMMDESSEPYSESTENSQLNVKISGMERKSSGKRDSILAHTKDKKKKVKLSAKLKLESSSPKIKSGKLLEEEKSTDFVFIPPEGKETKARVLTEHQKEVLKTKRCDIPALYNNLDASQDTLFSAQFSQEESMESLTLTEKPKEDAKIIKEEQMESTIFIHQDAPENCGIDEHSENASLPNCGGSVAETNPETLITGFDARKEVLISSKILSAESSSSTETSVVSSSSVSNATFSGTPPQPTSRRQTFITLEKFDGSETRPFSPSPLNNISSTVTVRNNQDNTTNTDMPPKARKREVTNSKSDSENLANAGKKSSRRWSKAEQSVTKKSKPSLTSEQEEHSSENNSPDLLSPTEHVSENDDHPSEATLEHKDGDPKPAVENASLEDLTTEEKNVGINMESKESTASVVARTEQIVNEDSQAAALAPNPKTLRRSSRRRSEAVDSCSDSQERESGQQKKERRKEEEKIISKSPLRIKDDKLPTQKLTDESPIQENLTEKGNTLPERTSGEPSVNAEIDQNRRKPDLENVSSEGGGGTLDNLDKSSEKPLRGRTRYQTRRASQGLISAVENSESDSSEAKEEVSRKKRSGKWKNRSSDSVDIEEQEEKKAEEEVMKTANQTLDGQAVPDVDVNAAAQVCEKSTNNNRVILQDSAGPADSLQAPPKGEEKSKINKCVDSSFVSLPVPESNLRTRNASKRLLYKQDNDSNVRVSDSSLSPEKFTQVECQHKRSRRVRRSKSCDCCGEKSQSQEKSFIGLKNTESYAIKSVEKKKTDLQVPETAPETREARDHAETKLAGEEPLVNFHVGLKEENCTTGDSVKSEAELQEASLPPEIVTVKEKTYDTDASEAVSEIQGPCSENHSPAEDPGLSECKDISQKQLSENGELDISDVGKACKVIAGSSPEGVETMELNVRNDAFVAADSEKSTQMDVSVDVATEEDNKKDECEAVTTEVNVEGVATEDFNSGMDLSDTPIPVSKDVETEHAASGEIEGESNESDSGSCEEMNKEMGSHKAQMSTEIDSARVKETDILASASKSEEALIGRLDVNTQSFVSDIEMSSGERTVNCKTETSIELNKLDEAKLSGNEATVGNDTLQEVCFTSEKVEKLPQCLLVQVASELGAESNTTSPEKLELDSFGSVNESPSGMQQARCVWSPLASPSTSILKRGLKRSQEDEISPVNKIRRVSFADPIYQAGLADDIDRRCSVVRSHSSNSSPIIKSVKTSPTSHSKHNTTSAKGFLSPGSQSSKFKSPKKCLITEMAQESMLSPTESVYPALVNCAASVDIILPQITSNMWARGLGQLIRAKNIKTIGDLSTLTASEIKTLPIRSPKVFNVKKALRVYHEQQMKSRGLEEIPIFDISEKAVNGVESRTVSTDEERFASDLIEPVTLDTPLSKNLVAQISALALQLDSEDLYSYTGSQLFEMHEKLGTMANSIIRNLQSRWRSPAHENS.

Disordered stretches follow at residues 1–24 (MTAP…VPPG) and 373–408 (SIPS…SPRG). Residues 373–385 (SIPSPQGNSSRGS) show a composition bias toward polar residues. Phosphoserine occurs at positions 385, 391, 779, 976, and 1005. Position 1044 is a phosphothreonine (T1044). A compositionally biased stretch (low complexity) spans 1184–1198 (SSSTETSVVSSSSVS). Disordered regions lie at residues 1184–1594 (SSST…QAVP) and 1613–1637 (RVIL…EKSK). 2 stretches are compositionally biased toward polar residues: residues 1199–1217 (NATF…QTFI) and 1228–1255 (RPFS…TNTD). T1215 is modified (phosphothreonine). A phosphoserine mark is found at S1231 and S1233. Residues 1263 to 1272 (REVTNSKSDS) are compositionally biased toward basic and acidic residues. A compositionally biased stretch (polar residues) spans 1289–1302 (AEQSVTKKSKPSLT). The segment covering 1323 to 1345 (HVSENDDHPSEATLEHKDGDPKP) has biased composition (basic and acidic residues). 4 positions are modified to phosphoserine: S1407, S1439, S1457, and S1498. The segment covering 1416 to 1455 (SQERESGQQKKERRKEEEKIISKSPLRIKDDKLPTQKLTD) has biased composition (basic and acidic residues). Residues 1457–1467 (SPIQENLTEKG) are compositionally biased toward polar residues. Phosphothreonine is present on T1504. Residues 1507-1516 (NLDKSSEKPL) are compositionally biased toward basic and acidic residues. Over residues 1525–1537 (RRASQGLISAVEN) the composition is skewed to polar residues. Residues S1528, S1538, S1540, S1542, and S1550 each carry the phosphoserine modification. Residues 1551 to 1560 (RKKRSGKWKN) are compositionally biased toward basic residues. Phosphoserine is present on residues S1562 and S1565. The span at 1572 to 1581 (EEKKAEEEVM) shows a compositional bias: basic and acidic residues. S1680 and S1683 each carry phosphoserine. The residue at position 1780 (T1780) is a Phosphothreonine. Phosphoserine is present on S1784. The tract at residues 1812–1836 (ASEAVSEIQGPCSENHSPAEDPGLS) is disordered. Residue S1842 is modified to Phosphoserine. The segment at 1882–2419 (DAFVAADSEK…RWRSPAHENS (538 aa)) is interaction with condensed chromosomes in telophase. Disordered stretches follow at residues 1890-1914 (EKST…ECEA) and 1929-1983 (FNSG…AQMS). S1931, S2094, S2109, S2121, S2125, S2144, S2153, S2208, S2287, S2341, S2413, and S2419 each carry phosphoserine. Residues 2119–2394 (VWSPLASPST…TGSQLFEMHE (276 aa)) are interaction with ERCC6. Residues 2182-2212 (SPIIKSVKTSPTSHSKHNTTSAKGFLSPGSQ) are disordered. Over residues 2189 to 2212 (KTSPTSHSKHNTTSAKGFLSPGSQ) the composition is skewed to polar residues.

The protein belongs to the RIF1 family. Interacts with TP53BP1 (when phosphorylated by ATM). May interact with TRF2. Interacts with SHLD2. Interacts with ERCC6 (via WHD region). Interacts with ASTE1. In terms of tissue distribution, expressed in Sertoli cells, prospermatagonia, early primary spermatocytes, and in oocytes at all stages of their growth. Expressed in embryonic stem (ES) and embryonic germ (EG) cells: expression is lost upon differentiation.

The protein resides in the nucleus. Its subcellular location is the chromosome. The protein localises to the telomere. It is found in the cytoplasm. It localises to the cytoskeleton. The protein resides in the spindle. Key regulator of TP53BP1 that plays a key role in the repair of double-strand DNA breaks (DSBs) in response to DNA damage: acts by promoting non-homologous end joining (NHEJ)-mediated repair of DSBs. In response to DNA damage, interacts with ATM-phosphorylated TP53BP1. Interaction with TP53BP1 leads to dissociate the interaction between NUDT16L1/TIRR and TP53BP1, thereby unmasking the tandem Tudor-like domain of TP53BP1 and allowing recruitment to DNA DSBs. Once recruited to DSBs, RIF1 and TP53BP1 act by promoting NHEJ-mediated repair of DSBs. In the same time, RIF1 and TP53BP1 specifically counteract the function of BRCA1 by blocking DSBs resection via homologous recombination (HR) during G1 phase. Also required for immunoglobulin class-switch recombination (CSR) during antibody genesis, a process that involves the generation of DNA DSBs. Promotes NHEJ of dysfunctional telomeres. The sequence is that of Telomere-associated protein RIF1 from Mus musculus (Mouse).